A 458-amino-acid polypeptide reads, in one-letter code: ATP synthase subunit beta (458 aa).

Gly148–Thr155 serves as a coordination point for ATP.

This sequence belongs to the ATPase alpha/beta chains family. F-type ATPases have 2 components, CF(1) - the catalytic core - and CF(0) - the membrane proton channel. CF(1) has five subunits: alpha(3), beta(3), gamma(1), delta(1), epsilon(1). CF(0) has three main subunits: a(1), b(2) and c(9-12). The alpha and beta chains form an alternating ring which encloses part of the gamma chain. CF(1) is attached to CF(0) by a central stalk formed by the gamma and epsilon chains, while a peripheral stalk is formed by the delta and b chains.

It is found in the cell inner membrane. The enzyme catalyses ATP + H2O + 4 H(+)(in) = ADP + phosphate + 5 H(+)(out). Functionally, produces ATP from ADP in the presence of a proton gradient across the membrane. The catalytic sites are hosted primarily by the beta subunits. This is ATP synthase subunit beta from Alkalilimnicola ehrlichii (strain ATCC BAA-1101 / DSM 17681 / MLHE-1).